The sequence spans 232 residues: UPF0502 protein mma_2112 (232 aa).

It belongs to the UPF0502 family.

The protein is UPF0502 protein mma_2112 of Janthinobacterium sp. (strain Marseille) (Minibacterium massiliensis).